Reading from the N-terminus, the 141-residue chain is Large ribosomal subunit protein uL16 (141 aa).

Residues 1–21 are compositionally biased toward basic residues; sequence MLMPKRTKFRKQMKGRNRGKS. The tract at residues 1–22 is disordered; sequence MLMPKRTKFRKQMKGRNRGKSF.

It belongs to the universal ribosomal protein uL16 family. In terms of assembly, part of the 50S ribosomal subunit.

Binds 23S rRNA and is also seen to make contacts with the A and possibly P site tRNAs. The sequence is that of Large ribosomal subunit protein uL16 from Wolinella succinogenes (strain ATCC 29543 / DSM 1740 / CCUG 13145 / JCM 31913 / LMG 7466 / NCTC 11488 / FDC 602W) (Vibrio succinogenes).